Here is a 215-residue protein sequence, read N- to C-terminus: Hibernation-associated plasma protein HP-25 (215 aa).

The signal sequence occupies residues 1–28; the sequence is MPAQRGGALSMGAAGFWILVLSITSALA. The segment at 29 to 96 is disordered; the sequence is DSNNQGNSEP…RPKSAFAVKL (68 aa). 2 stretches are compositionally biased toward pro residues: residues 39 to 51 and 60 to 77; these read CGPPGPPGPPGIP and LGPPGPPGVPGIPGPQGP. Residues 40 to 81 form the Collagen-like domain; that stretch reads GPPGPPGPPGIPGFPGAPGALGPPGPPGVPGIPGPQGPPGDV. Residues 85 to 215 form the C1q domain; sequence SSRPKSAFAV…VFFGYLLYGK (131 aa). The N-linked (GlcNAc...) asparagine glycan is linked to Asn167.

As to expression, plasma; synthesized in the liver.

The protein localises to the secreted. Plasma proteins HP-20, HP-25, HP-27 and HP-55 form a 140 kDa complex via disulfide bonds in the plasma and are hibernation specific. In Tamias sibiricus (Siberian chipmunk), this protein is Hibernation-associated plasma protein HP-25.